Reading from the N-terminus, the 970-residue chain is uncharacterized protein (970 aa).

A helical transmembrane segment spans residues 11-31 (WILKIGTILGLVCLGLFGVIF). Positions 366 to 387 (ASNSNDNNNQNNNNNNNSSDVI) are disordered. The segment covering 367–387 (SNSNDNNNQNNNNNNNSSDVI) has biased composition (low complexity). 11 helical membrane-spanning segments follow: residues 515–535 (FASS…LLTL), 537–557 (YKLL…SSLV), 558–578 (IFSA…FFVI), 614–634 (FFAN…VIYL), 645–665 (LMAI…IVLI), 726–746 (FLFV…LYLV), 762–782 (SNGI…YCLI), 789–809 (CLSY…VMYL), 816–836 (IDQS…FFAA), 877–897 (IESS…FGGI), and 903–923 (LVIF…AFLP).

It is found in the cell membrane. This is an uncharacterized protein from Mycoplasma genitalium (strain ATCC 33530 / DSM 19775 / NCTC 10195 / G37) (Mycoplasmoides genitalium).